The following is a 347-amino-acid chain: NADH-ubiquinone oxidoreductase chain 2 (347 aa).

A run of 11 helical transmembrane segments spans residues 1–21, 25–45, 60–80, 89–109, 111–131, 149–169, 178–198, 201–221, 242–262, 274–294, and 323–343; these read MNPI…MIVM, HWLM…PILM, FLTQ…NLMF, IFNP…LGLS, FHFW…LILL, INLD…GWGG, IMAY…TYNP, TALN…LFML, SLIL…GFIP, DSII…YFYM, and MNFL…TPIM.

This sequence belongs to the complex I subunit 2 family. As to quaternary structure, core subunit of respiratory chain NADH dehydrogenase (Complex I) which is composed of 45 different subunits. Interacts with TMEM242.

The protein localises to the mitochondrion inner membrane. It carries out the reaction a ubiquinone + NADH + 5 H(+)(in) = a ubiquinol + NAD(+) + 4 H(+)(out). In terms of biological role, core subunit of the mitochondrial membrane respiratory chain NADH dehydrogenase (Complex I) which catalyzes electron transfer from NADH through the respiratory chain, using ubiquinone as an electron acceptor. Essential for the catalytic activity and assembly of complex I. The chain is NADH-ubiquinone oxidoreductase chain 2 from Ceratotherium simum (White rhinoceros).